Here is a 200-residue protein sequence, read N- to C-terminus: ATP-dependent Clp protease proteolytic subunit 1 (200 aa).

Serine 98 (nucleophile) is an active-site residue. Histidine 123 is a catalytic residue.

Belongs to the peptidase S14 family. Fourteen ClpP subunits assemble into 2 heptameric rings which stack back to back to give a disk-like structure with a central cavity, resembling the structure of eukaryotic proteasomes.

The protein resides in the cytoplasm. The enzyme catalyses Hydrolysis of proteins to small peptides in the presence of ATP and magnesium. alpha-casein is the usual test substrate. In the absence of ATP, only oligopeptides shorter than five residues are hydrolyzed (such as succinyl-Leu-Tyr-|-NHMec, and Leu-Tyr-Leu-|-Tyr-Trp, in which cleavage of the -Tyr-|-Leu- and -Tyr-|-Trp bonds also occurs).. Cleaves peptides in various proteins in a process that requires ATP hydrolysis. Has a chymotrypsin-like activity. Plays a major role in the degradation of misfolded proteins. The protein is ATP-dependent Clp protease proteolytic subunit 1 of Mycobacterium bovis (strain ATCC BAA-935 / AF2122/97).